Reading from the N-terminus, the 371-residue chain is Chaperone protein DnaJ (371 aa).

Positions 5-70 (DYYEVLGVNR…QKRAAYDQYG (66 aa)) constitute a J domain. The segment at 31–52 (KYHPDRNPDNPKAEESFKEAKE) is disordered. A compositionally biased stretch (basic and acidic residues) spans 32 to 52 (YHPDRNPDNPKAEESFKEAKE). Residues 132-210 (RTETKIRIPV…CQGAGRVKKH (79 aa)) form a CR-type zinc finger. Cys145, Cys148, Cys162, Cys165, Cys184, Cys187, Cys198, and Cys201 together coordinate Zn(2+). CXXCXGXG motif repeat units follow at residues 145–152 (CETCHGSG), 162–169 (CTTCGGHG), 184–191 (CPKCHGSG), and 198–205 (CPSCQGAG).

The protein belongs to the DnaJ family. As to quaternary structure, homodimer. Zn(2+) is required as a cofactor.

It is found in the cytoplasm. Its function is as follows. Participates actively in the response to hyperosmotic and heat shock by preventing the aggregation of stress-denatured proteins and by disaggregating proteins, also in an autonomous, DnaK-independent fashion. Unfolded proteins bind initially to DnaJ; upon interaction with the DnaJ-bound protein, DnaK hydrolyzes its bound ATP, resulting in the formation of a stable complex. GrpE releases ADP from DnaK; ATP binding to DnaK triggers the release of the substrate protein, thus completing the reaction cycle. Several rounds of ATP-dependent interactions between DnaJ, DnaK and GrpE are required for fully efficient folding. Also involved, together with DnaK and GrpE, in the DNA replication of plasmids through activation of initiation proteins. This is Chaperone protein DnaJ from Methylovorus sp. (strain SS1 / DSM 11726).